A 384-amino-acid chain; its full sequence is PqqA peptide cyclase (384 aa).

In terms of domain architecture, Radical SAM core spans 14–230; it reads IPAPVGLLAE…EAARERLKGQ (217 aa). [4Fe-4S] cluster contacts are provided by Cys28, Cys32, and Cys35.

Belongs to the radical SAM superfamily. PqqE family. As to quaternary structure, interacts with PqqD. The interaction is necessary for activity of PqqE. The cofactor is [4Fe-4S] cluster.

The enzyme catalyses [PQQ precursor protein] + S-adenosyl-L-methionine = E-Y cross-linked-[PQQ precursor protein] + 5'-deoxyadenosine + L-methionine + H(+). It participates in cofactor biosynthesis; pyrroloquinoline quinone biosynthesis. Functionally, catalyzes the cross-linking of a glutamate residue and a tyrosine residue in the PqqA protein as part of the biosynthesis of pyrroloquinoline quinone (PQQ). The chain is PqqA peptide cyclase from Methylorubrum extorquens (strain CM4 / NCIMB 13688) (Methylobacterium extorquens).